Consider the following 117-residue polypeptide: Large ribosomal subunit protein eL30B (117 aa).

The segment covering 1-14 (MSAAPTTAPVAAVS) has biased composition (low complexity). The disordered stretch occupies residues 1 to 22 (MSAAPTTAPVAAVSKKGKKSGD).

The protein belongs to the eukaryotic ribosomal protein eL30 family. As to quaternary structure, component of the large ribosomal subunit (LSU). Mature yeast ribosomes consist of a small (40S) and a large (60S) subunit. The 40S small subunit contains 1 molecule of ribosomal RNA (18S rRNA) and at least 33 different proteins. The large 60S subunit contains 3 rRNA molecules (25S, 5.8S and 5S rRNA) and at least 46 different proteins.

The protein localises to the cytoplasm. Functionally, component of the ribosome, a large ribonucleoprotein complex responsible for the synthesis of proteins in the cell. The small ribosomal subunit (SSU) binds messenger RNAs (mRNAs) and translates the encoded message by selecting cognate aminoacyl-transfer RNA (tRNA) molecules. The large subunit (LSU) contains the ribosomal catalytic site termed the peptidyl transferase center (PTC), which catalyzes the formation of peptide bonds, thereby polymerizing the amino acids delivered by tRNAs into a polypeptide chain. The nascent polypeptides leave the ribosome through a tunnel in the LSU and interact with protein factors that function in enzymatic processing, targeting, and the membrane insertion of nascent chains at the exit of the ribosomal tunnel. This Schizosaccharomyces pombe (strain 972 / ATCC 24843) (Fission yeast) protein is Large ribosomal subunit protein eL30B (rpl3002).